The primary structure comprises 302 residues: Glycine--tRNA ligase alpha subunit (302 aa).

This sequence belongs to the class-II aminoacyl-tRNA synthetase family. Tetramer of two alpha and two beta subunits.

The protein localises to the cytoplasm. It carries out the reaction tRNA(Gly) + glycine + ATP = glycyl-tRNA(Gly) + AMP + diphosphate. This is Glycine--tRNA ligase alpha subunit (glyQ) from Haemophilus influenzae (strain ATCC 51907 / DSM 11121 / KW20 / Rd).